The sequence spans 647 residues: Leishmanolysin-like peptidase (647 aa).

His-264 provides a ligand contact to Zn(2+). Residue Glu-265 is part of the active site. Positions 268 and 370 each coordinate Zn(2+).

This sequence belongs to the peptidase M8 family. Zn(2+) is required as a cofactor. In terms of tissue distribution, expressed in all cell lines analyzed.

The protein localises to the cytoplasm. Its subcellular location is the lipid droplet. Its function is as follows. Metalloprotease. The polypeptide is Leishmanolysin-like peptidase (LMLN) (Homo sapiens (Human)).